The following is a 432-amino-acid chain: Killer cell immunoglobulin-like receptor 3DL1 (432 aa).

An N-terminal signal peptide occupies residues 1-21 (MLLWFLSLVCSGFFLVQRMSA). Residues 22–335 (HVGSHDKPFL…ADTKTNNYKN (314 aa)) are Extracellular-facing. Ig-like C2-type domains lie at 42-100 (GQNV…HPQY), 135-202 (GGNV…NSYY), and 238-301 (GETM…FRNA). Asn44 carries an N-linked (GlcNAc...) asparagine glycan. A disulfide bridge connects residues Cys49 and Cys95. Residue Asn137 is glycosylated (N-linked (GlcNAc...) asparagine). 2 disulfides stabilise this stretch: Cys142–Cys195 and Cys245–Cys294. Asn300 is a glycosylation site (N-linked (GlcNAc...) asparagine). A helical transmembrane segment spans residues 336–356 (LHILTGLLVTMVLVVIIIFYS). Residues 357 to 432 (CYFSKQNKSQ…DTIVYMEIMK (76 aa)) lie on the Cytoplasmic side of the membrane.

This sequence belongs to the immunoglobulin superfamily.

It is found in the cell membrane. Its function is as follows. Receptor on natural killer (NK) cells. Inhibits the activity of NK cells thus preventing cell lysis. This Mus musculus (Mouse) protein is Killer cell immunoglobulin-like receptor 3DL1 (Kir3dl1).